We begin with the raw amino-acid sequence, 195 residues long: Interferon omega-1 (195 aa).

Residues 1–23 form the signal peptide; that stretch reads MAFSVSSLMALVVISSSPVSSMS. 2 disulfides stabilise this stretch: C24–C122 and C52–C162. N-linked (GlcNAc...) asparagine glycosylation occurs at N101.

The protein belongs to the alpha/beta interferon family.

The protein localises to the secreted. The chain is Interferon omega-1 from Equus caballus (Horse).